A 96-amino-acid polypeptide reads, in one-letter code: Small ribosomal subunit protein bS16m (96 aa).

The protein belongs to the bacterial ribosomal protein bS16 family. As to quaternary structure, component of the mitochondrial small ribosomal subunit (mt-SSU). Mature yeast 74S mitochondrial ribosomes consist of a small (37S) and a large (54S) subunit. The 37S small subunit contains a 15S ribosomal RNA (15S mt-rRNA) and at least 32 different proteins. The 54S large subunit contains a 21S rRNA (21S mt-rRNA) and at least 45 different proteins.

The protein localises to the mitochondrion. Component of the mitochondrial ribosome (mitoribosome), a dedicated translation machinery responsible for the synthesis of mitochondrial genome-encoded proteins, including at least some of the essential transmembrane subunits of the mitochondrial respiratory chain. The mitoribosomes are attached to the mitochondrial inner membrane and translation products are cotranslationally integrated into the membrane. The sequence is that of Small ribosomal subunit protein bS16m (mrps16) from Schizosaccharomyces pombe (strain 972 / ATCC 24843) (Fission yeast).